The following is a 522-amino-acid chain: Amine oxidase [flavin-containing] (522 aa).

The Cytoplasmic segment spans residues 1-492 (MTANAYDVIV…WERNLPSVGG (492 aa)). Residue Cys-398 is modified to S-8alpha-FAD cysteine. The chain crosses the membrane as a helical; Anchor for type IV membrane protein span at residues 493–513 (FLKFMGVSSFLAAATAAGLVA). Topologically, residues 514-522 (CKKGLLPRC) are mitochondrial intermembrane.

It belongs to the flavin monoamine oxidase family. As to quaternary structure, monomer, homo- or heterodimer (containing two subunits of similar size). Each subunit contains a covalently bound flavin. Enzymatically active as monomer. Requires FAD as cofactor. In terms of tissue distribution, strongest expression in brain and intestine, followed by liver, heart and gill. Little expression in spleen, eye or muscle. In brain, highest activity in noradrenergic and serotonergic cell groups and those of the habenulointerpeduncular pathway; moderate levels in dopaminergic cell clusters.

It is found in the mitochondrion outer membrane. The enzyme catalyses a secondary aliphatic amine + O2 + H2O = a primary amine + an aldehyde + H2O2. It catalyses the reaction a primary methyl amine + O2 + H2O = an aldehyde + H2O2 + NH4(+). It carries out the reaction serotonin + O2 + H2O = (5-hydroxyindol-3-yl)acetaldehyde + H2O2 + NH4(+). The catalysed reaction is 2-phenylethylamine + O2 + H2O = 2-phenylacetaldehyde + H2O2 + NH4(+). The enzyme catalyses tyramine + O2 + H2O = (4-hydroxyphenyl)acetaldehyde + H2O2 + NH4(+). It catalyses the reaction dopamine + O2 + H2O = 3,4-dihydroxyphenylacetaldehyde + H2O2 + NH4(+). It carries out the reaction (R)-adrenaline + O2 + H2O = (R)-3,4-dihydroxymandelaldehyde + methylamine + H2O2. The catalysed reaction is (R)-noradrenaline + O2 + H2O = (R)-3,4-dihydroxymandelaldehyde + H2O2 + NH4(+). The enzyme catalyses kynuramine + O2 + H2O = 3-(2-aminophenyl)-3-oxopropanal + H2O2 + NH4(+). It catalyses the reaction tryptamine + O2 + H2O = indole-3-acetaldehyde + H2O2 + NH4(+). Inhibited by both clorgyline (selective MAOA inhibitor) and deprenyl (selective MAOB inhibitor). In terms of biological role, catalyzes the oxidative deamination of biogenic and xenobiotic amines and has important functions in the metabolism of neuroactive and vasoactive amines in the central nervous system and peripheral tissues. Preferentially oxidizes serotonin and tyramine. Also catalyzes the oxidative deamination of kynuramine to 3-(2-aminophenyl)-3-oxopropanal that can spontaneously condense to 4-hydroxyquinoline. In Danio rerio (Zebrafish), this protein is Amine oxidase [flavin-containing].